A 180-amino-acid polypeptide reads, in one-letter code: Probable phospholipid hydroperoxide glutathione peroxidase (180 aa).

The active site involves C54.

The protein belongs to the glutathione peroxidase family.

It is found in the cytoplasm. It carries out the reaction a hydroperoxy polyunsaturated fatty acid + 2 glutathione = a hydroxy polyunsaturated fatty acid + glutathione disulfide + H2O. Its function is as follows. Protects cells and enzymes from oxidative damage, by catalyzing the reduction of hydrogen peroxide, lipid peroxides and organic hydroperoxide, by glutathione. In Helianthus annuus (Common sunflower), this protein is Probable phospholipid hydroperoxide glutathione peroxidase (GPXHA-2).